Reading from the N-terminus, the 966-residue chain is SH3 domain-binding protein 4 (966 aa).

The 60-residue stretch at 57–116 (GAAREVVAIKDCCPSSFTTLKFSKGDRLYVLDSSGAEWWYAHNNTEMGYIPAAYVEPINY) folds into the SH3 1 domain. Residues 322–457 (TNIVCRLDSS…LEPCMYVCVV (136 aa)) enclose the ZU5 domain. The region spanning 657–727 (NNLKFGKLIK…HAKNVLVVGK (71 aa)) is the SH3 2 domain.

As to quaternary structure, homodimer or homooligomer.

Its subcellular location is the membrane. It is found in the clathrin-coated pit. The protein resides in the cytoplasmic vesicle. The protein localises to the clathrin-coated vesicle. It localises to the nucleus. Its function is as follows. Possible role in regulating endocytosis of the transferrin receptor at the plasma membrane. Alternatively, may function as a negative regulator of the amino acid-induced TOR signaling by inhibiting the formation of active Rag GTPase complexes. Preferentially binds inactive Rag GTPase complexes and prevents their interaction with the mTORC1 complex inhibiting its relocalization to lysosomes and its activation. Thereby, may indirectly regulate cell growth, proliferation and autophagy. This is SH3 domain-binding protein 4 (sh3bp4) from Seriola quinqueradiata (Five-ray yellowtail).